Reading from the N-terminus, the 290-residue chain is 4-diphosphocytidyl-2-C-methyl-D-erythritol kinase (290 aa).

Lys-10 is a catalytic residue. An ATP-binding site is contributed by 95–105 (PVAAGLAGGSS). Asp-137 is an active-site residue.

Belongs to the GHMP kinase family. IspE subfamily.

It catalyses the reaction 4-CDP-2-C-methyl-D-erythritol + ATP = 4-CDP-2-C-methyl-D-erythritol 2-phosphate + ADP + H(+). It participates in isoprenoid biosynthesis; isopentenyl diphosphate biosynthesis via DXP pathway; isopentenyl diphosphate from 1-deoxy-D-xylulose 5-phosphate: step 3/6. In terms of biological role, catalyzes the phosphorylation of the position 2 hydroxy group of 4-diphosphocytidyl-2C-methyl-D-erythritol. This is 4-diphosphocytidyl-2-C-methyl-D-erythritol kinase from Geobacillus kaustophilus (strain HTA426).